The sequence spans 181 residues: Adenine phosphoribosyltransferase (181 aa).

This sequence belongs to the purine/pyrimidine phosphoribosyltransferase family. As to quaternary structure, homodimer.

It is found in the cytoplasm. The catalysed reaction is AMP + diphosphate = 5-phospho-alpha-D-ribose 1-diphosphate + adenine. The protein operates within purine metabolism; AMP biosynthesis via salvage pathway; AMP from adenine: step 1/1. Functionally, catalyzes a salvage reaction resulting in the formation of AMP, that is energically less costly than de novo synthesis. The protein is Adenine phosphoribosyltransferase of Pseudoalteromonas translucida (strain TAC 125).